A 391-amino-acid chain; its full sequence is Lipoyl synthase, mitochondrial (391 aa).

The transit peptide at 1-44 (MVHPHLSRTKRTFFSHSSQMISRHIRKTNSLAFVRALSASETAV) directs the protein to the mitochondrion. Cys120, Cys125, Cys131, Cys150, Cys154, Cys157, and Ser365 together coordinate [4Fe-4S] cluster. A Radical SAM core domain is found at 135–354 (KKSEATATIM…KEVALEMGFL (220 aa)).

It belongs to the radical SAM superfamily. Lipoyl synthase family. Requires [4Fe-4S] cluster as cofactor.

It is found in the mitochondrion. It catalyses the reaction [[Fe-S] cluster scaffold protein carrying a second [4Fe-4S](2+) cluster] + N(6)-octanoyl-L-lysyl-[protein] + 2 oxidized [2Fe-2S]-[ferredoxin] + 2 S-adenosyl-L-methionine + 4 H(+) = [[Fe-S] cluster scaffold protein] + N(6)-[(R)-dihydrolipoyl]-L-lysyl-[protein] + 4 Fe(3+) + 2 hydrogen sulfide + 2 5'-deoxyadenosine + 2 L-methionine + 2 reduced [2Fe-2S]-[ferredoxin]. It functions in the pathway protein modification; protein lipoylation via endogenous pathway; protein N(6)-(lipoyl)lysine from octanoyl-[acyl-carrier-protein]: step 2/2. In terms of biological role, catalyzes the radical-mediated insertion of two sulfur atoms into the C-6 and C-8 positions of the octanoyl moiety bound to the lipoyl domains of lipoate-dependent enzymes, thereby converting the octanoylated domains into lipoylated derivatives. The sequence is that of Lipoyl synthase, mitochondrial from Clavispora lusitaniae (strain ATCC 42720) (Yeast).